Here is a 66-residue protein sequence, read N- to C-terminus: Putative transmembrane protein ORF66 (66 aa).

The Cytoplasmic segment spans residues 1-6 (MSDVDD). A helical transmembrane segment spans residues 7 to 27 (TIVDSIAIVGAILIGIFLIVV). Residues 28–39 (SVSNTSLFNNTE) lie on the Extracellular side of the membrane. The helical transmembrane segment at 40–60 (YDSMINSVLVIISSVIAYTLG) threads the bilayer. The Cytoplasmic segment spans residues 61-66 (KRRSKS).

It localises to the host membrane. This chain is Putative transmembrane protein ORF66, found in Acidianus filamentous virus 2 (isolate Italy/Pozzuoli) (AFV-2).